Reading from the N-terminus, the 168-residue chain is GTP-dependent dephospho-CoA kinase (168 aa).

The GTP site is built by D49, V50, V51, D68, K70, and E120.

The protein belongs to the GTP-dependent DPCK family.

It carries out the reaction 3'-dephospho-CoA + GTP = GDP + CoA + H(+). Its pathway is cofactor biosynthesis; coenzyme A biosynthesis. Catalyzes the GTP-dependent phosphorylation of the 3'-hydroxyl group of dephosphocoenzyme A to form coenzyme A (CoA). This Pyrobaculum neutrophilum (strain DSM 2338 / JCM 9278 / NBRC 100436 / V24Sta) (Thermoproteus neutrophilus) protein is GTP-dependent dephospho-CoA kinase.